A 140-amino-acid chain; its full sequence is MGPMAHRSHTGTGPSQRQLRVGELIRRTLADVLNRGEIHDPELNRLSITVGEVRCSPDLKVATVHVMPLGGKDVEEAISLLSKHRGELRHHITRQMTLKYAPDLRFRPDETFDRLDETRRLFSDKTVMRDIRGGGEADED.

The protein belongs to the RbfA family. As to quaternary structure, monomer. Binds 30S ribosomal subunits, but not 50S ribosomal subunits or 70S ribosomes.

The protein resides in the cytoplasm. Its function is as follows. One of several proteins that assist in the late maturation steps of the functional core of the 30S ribosomal subunit. Associates with free 30S ribosomal subunits (but not with 30S subunits that are part of 70S ribosomes or polysomes). Required for efficient processing of 16S rRNA. May interact with the 5'-terminal helix region of 16S rRNA. The protein is Ribosome-binding factor A of Cereibacter sphaeroides (strain ATCC 17023 / DSM 158 / JCM 6121 / CCUG 31486 / LMG 2827 / NBRC 12203 / NCIMB 8253 / ATH 2.4.1.) (Rhodobacter sphaeroides).